Consider the following 88-residue polypeptide: uncharacterized protein (88 aa).

This is an uncharacterized protein from Thermoproteus tenax virus 1 (strain KRA1) (TTV1).